The following is a 504-amino-acid chain: MTRTLSADADTRTATPPLMYVNGEWLPARSGATFPTIEPSTGRPITEIPRGDSSDVDAAVKAAADVAVEWQFTDAITRAALLRRLAELVAENAEELARIESLDSGHYLAKARELVTAIPLWLEYWAGAADKVGGRTIAVPGNKLSFTLLEPLGVTAHIIPWNYPLLILARSIAPALALGNTCVVKPAEDTSLSALKFAELVHAAGFPAGVFNVVTGYGSEAGAALAAHPEVRGITFTGSTETGREIARLGGQHIAQVNLELGGKSPLVVFPDAPLEDAVEVAVQGFCSRAGQVCVAGSRLFLHEDIADRFLEMLVSRLETVTVGDPFDGATQMGPLASKKHYDRVREYIEVGKQEATLLYGGGRPTDTPDDGFFVEPTVFVDVATDARIAREEIFGPVTAVMRWSSVDDLIATINDSEFGLFAVLWCRDITSALDTAKRLQVGSVMINDWFGELPMTPHGGHKQSGTGREEGLEAVHGYTQVKHIGINLEPSPAKSADWAGAPL.

Glutamate 260 serves as the catalytic Proton acceptor. Residue cysteine 294 is the Nucleophile of the active site.

This sequence belongs to the aldehyde dehydrogenase family.

The protein resides in the cytoplasm. The catalysed reaction is 2-hydroxy-2-methylpropanal + NAD(+) + H2O = 2-hydroxy-2-methylpropanoate + NADH + 2 H(+). Its function is as follows. Involved in the degradation of methyl tert-butyl ether (MTBE). Catalyzes the conversion of hydroxyisobutyraldehyde to hydroxyisobutyric acid (HIBA). This chain is Hydroxyisobutyraldehyde dehydrogenase, found in Mycolicibacterium austroafricanum (Mycobacterium austroafricanum).